We begin with the raw amino-acid sequence, 581 residues long: Proline--tRNA ligase (581 aa).

It belongs to the class-II aminoacyl-tRNA synthetase family. ProS type 1 subfamily. As to quaternary structure, homodimer.

The protein resides in the cytoplasm. The catalysed reaction is tRNA(Pro) + L-proline + ATP = L-prolyl-tRNA(Pro) + AMP + diphosphate. Its function is as follows. Catalyzes the attachment of proline to tRNA(Pro) in a two-step reaction: proline is first activated by ATP to form Pro-AMP and then transferred to the acceptor end of tRNA(Pro). As ProRS can inadvertently accommodate and process non-cognate amino acids such as alanine and cysteine, to avoid such errors it has two additional distinct editing activities against alanine. One activity is designated as 'pretransfer' editing and involves the tRNA(Pro)-independent hydrolysis of activated Ala-AMP. The other activity is designated 'posttransfer' editing and involves deacylation of mischarged Ala-tRNA(Pro). The misacylated Cys-tRNA(Pro) is not edited by ProRS. The sequence is that of Proline--tRNA ligase from Verminephrobacter eiseniae (strain EF01-2).